The following is a 157-amino-acid chain: MRRQTLPPEALDDTDRAILNRLQEGFPLTPRPFDDAGAALGLTGAQLIERLERLRAIGAITRFGPFYDAAAMGGAFCLCALSAPQADFDRIAALVNAHPEVAHNYARDHALNMWFVLATATPEGIAETAGRIEAETGLTVWRFPKLREFFIGFRVAA.

Belongs to the Ahb/Nir family. As to quaternary structure, forms a complex composed of NirDL, NirG and NirH. All proteins are required for the total conversion of siroheme to didecarboxysiroheme.

The catalysed reaction is siroheme + 2 H(+) = 12,18-didecarboxysiroheme + 2 CO2. The protein operates within porphyrin-containing compound metabolism. Its function is as follows. Involved in heme d1 biosynthesis. Catalyzes the decarboxylation of siroheme into didecarboxysiroheme. Siroheme is probably decarboxylated to monodecarboxysiroheme, which is in turn decarboxylated to didecarboxysiroheme. The protein is Siroheme decarboxylase NirG subunit of Paracoccus pantotrophus (Thiosphaera pantotropha).